The primary structure comprises 506 residues: Cysteine--tRNA ligase (506 aa).

Residue Cys34 participates in Zn(2+) binding. A 'HIGH' region motif is present at residues 36-46; it reads PTVYDFAHIGN. Zn(2+)-binding residues include Cys230, His269, and Glu273. Positions 302-306 match the 'KMSKS' region motif; sequence KMSKS. Lys305 is a binding site for ATP.

Belongs to the class-I aminoacyl-tRNA synthetase family. As to quaternary structure, monomer. Requires Zn(2+) as cofactor.

Its subcellular location is the cytoplasm. The catalysed reaction is tRNA(Cys) + L-cysteine + ATP = L-cysteinyl-tRNA(Cys) + AMP + diphosphate. This chain is Cysteine--tRNA ligase, found in Brucella ovis (strain ATCC 25840 / 63/290 / NCTC 10512).